The following is a 191-amino-acid chain: uncharacterized protein (191 aa).

Positions 3–63 (IDRKKLILEA…EIFTTLLKEM (61 aa)) constitute an HTH tetR-type domain. Positions 26–45 (TMDLVAKLANVGKGTIYTFF) form a DNA-binding region, H-T-H motif.

This is an uncharacterized protein from Bacillus subtilis (strain 168).